The following is a 133-amino-acid chain: uncharacterized protein (133 aa).

The recombinase DNA-binding region spans 1-82 (MIDKIKKGYS…QKMLHDRQNF (82 aa)).

This is an uncharacterized protein from Bacillus phage phi105 (Bacteriophage phi-105).